A 590-amino-acid polypeptide reads, in one-letter code: Arginine--tRNA ligase, cytoplasmic (590 aa).

At Ala2 the chain carries N-acetylalanine. L-arginine is bound by residues 137-139 (SPN), His148, Tyr322, Asp326, and Gln350. The 'HIGH' region motif lies at 138–149 (PNIAKEMHVGHL). Residues 470-484 (DTAVYLLYAHARICS) are interaction with tRNA.

It belongs to the class-I aminoacyl-tRNA synthetase family.

Its subcellular location is the cytoplasm. It localises to the cytosol. The enzyme catalyses tRNA(Arg) + L-arginine + ATP = L-arginyl-tRNA(Arg) + AMP + diphosphate. Forms part of a macromolecular complex that catalyzes the attachment of specific amino acids to cognate tRNAs during protein synthesis. This Arabidopsis thaliana (Mouse-ear cress) protein is Arginine--tRNA ligase, cytoplasmic.